We begin with the raw amino-acid sequence, 229 residues long: Vacuolar protein sorting-associated protein 24 homolog 1 (229 aa).

A coiled-coil region spans residues 15-60 (KQLLRDWQRKLRQECRNIERQIRDIQKEERNVQKAIKEAAKRNDMV). Residues 193 to 215 (VPAQKASTSREEEAVAEGVDDEE) form a disordered region. A compositionally biased stretch (acidic residues) spans 206-215 (AVAEGVDDEE).

This sequence belongs to the SNF7 family. Component of the endosomal sorting required for transport complex III (ESCRT-III), composed at least of VPS2, VPS20, VPS24 and VPS32. Interacts with SKD1.

The protein resides in the endosome. Its function is as follows. Component of the ESCRT-III complex, which is required for multivesicular bodies (MVBs) formation and sorting of endosomal cargo proteins into MVBs. The ESCRT-III complex is probably involved in the concentration of MVB cargo. This is Vacuolar protein sorting-associated protein 24 homolog 1 (VPS24-1) from Arabidopsis thaliana (Mouse-ear cress).